Here is a 485-residue protein sequence, read N- to C-terminus: D-alanine--D-alanyl carrier protein ligase (485 aa).

Residue 144-145 coordinates ATP; that stretch reads TS. Position 189 (aspartate 189) interacts with D-alanine. 284–289 is a binding site for ATP; it reads NTYGPT. Valine 293 is a D-alanine binding site. ATP is bound by residues aspartate 365 and lysine 473. Lysine 473 provides a ligand contact to D-alanine.

This sequence belongs to the ATP-dependent AMP-binding enzyme family. DltA subfamily.

The protein localises to the cytoplasm. The enzyme catalyses holo-[D-alanyl-carrier protein] + D-alanine + ATP = D-alanyl-[D-alanyl-carrier protein] + AMP + diphosphate. It functions in the pathway cell wall biogenesis; lipoteichoic acid biosynthesis. Functionally, catalyzes the first step in the D-alanylation of lipoteichoic acid (LTA), the activation of D-alanine and its transfer onto the D-alanyl carrier protein (Dcp) DltC. In an ATP-dependent two-step reaction, forms a high energy D-alanyl-AMP intermediate, followed by transfer of the D-alanyl residue as a thiol ester to the phosphopantheinyl prosthetic group of the Dcp. D-alanylation of LTA plays an important role in modulating the properties of the cell wall in Gram-positive bacteria, influencing the net charge of the cell wall. This chain is D-alanine--D-alanyl carrier protein ligase, found in Staphylococcus epidermidis (strain ATCC 35984 / DSM 28319 / BCRC 17069 / CCUG 31568 / BM 3577 / RP62A).